The primary structure comprises 229 residues: Flagellar L-ring protein (229 aa).

Residues 1 to 23 (MLSRLGARALVCLAGVAMLAASG) form the signal peptide. Residue Cys24 is the site of N-palmitoyl cysteine attachment. A lipid anchor (S-diacylglycerol cysteine) is attached at Cys24.

The protein belongs to the FlgH family. In terms of assembly, the basal body constitutes a major portion of the flagellar organelle and consists of four rings (L,P,S, and M) mounted on a central rod.

It is found in the cell outer membrane. Its subcellular location is the bacterial flagellum basal body. Functionally, assembles around the rod to form the L-ring and probably protects the motor/basal body from shearing forces during rotation. The chain is Flagellar L-ring protein from Cupriavidus taiwanensis (strain DSM 17343 / BCRC 17206 / CCUG 44338 / CIP 107171 / LMG 19424 / R1) (Ralstonia taiwanensis (strain LMG 19424)).